A 450-amino-acid chain; its full sequence is Acyltransferase GLAUCE (450 aa).

Residues His-171 and Glu-394 each act as proton acceptor in the active site.

It belongs to the plant acyltransferase family. As to expression, restricted to the central cells of embryo sacs.

Its subcellular location is the cytoplasm. It is found in the nucleus. Required for double fertilization of the egg cell and the central cell by two sperm cells, resulting in the formation of the embryo and the endosperm. Involved in the regulation of embryonic expression of PHE1. Essential in maternal tissues to ensure the paternal embryonic expression of several genes, including RPS5a and FAC1, both of which being essential for early embryo and endosperm development in fertilized seeds. The chain is Acyltransferase GLAUCE from Arabidopsis thaliana (Mouse-ear cress).